We begin with the raw amino-acid sequence, 347 residues long: GMP reductase (347 aa).

108-131 (ADFEKTKQILDLNPALNFVCIDVA) serves as a coordination point for NADP(+). K(+)-binding residues include G181 and G183. C186 functions as the Thioimidate intermediate in the catalytic mechanism. Residue 216-239 (IVSDGGCTTPGDVAKAFGGGADFV) participates in NADP(+) binding.

It belongs to the IMPDH/GMPR family. GuaC type 1 subfamily. Homotetramer.

The catalysed reaction is IMP + NH4(+) + NADP(+) = GMP + NADPH + 2 H(+). Catalyzes the irreversible NADPH-dependent deamination of GMP to IMP. It functions in the conversion of nucleobase, nucleoside and nucleotide derivatives of G to A nucleotides, and in maintaining the intracellular balance of A and G nucleotides. The protein is GMP reductase of Shigella flexneri.